A 279-amino-acid chain; its full sequence is Thiazole synthase (279 aa).

The Schiff-base intermediate with DXP role is filled by Lys-116. Residues Gly-177, Ala-203–Gly-204, and Asn-225–Ser-226 contribute to the 1-deoxy-D-xylulose 5-phosphate site.

This sequence belongs to the ThiG family. As to quaternary structure, homotetramer. Forms heterodimers with either ThiH or ThiS.

Its subcellular location is the cytoplasm. It carries out the reaction [ThiS sulfur-carrier protein]-C-terminal-Gly-aminoethanethioate + 2-iminoacetate + 1-deoxy-D-xylulose 5-phosphate = [ThiS sulfur-carrier protein]-C-terminal Gly-Gly + 2-[(2R,5Z)-2-carboxy-4-methylthiazol-5(2H)-ylidene]ethyl phosphate + 2 H2O + H(+). The protein operates within cofactor biosynthesis; thiamine diphosphate biosynthesis. In terms of biological role, catalyzes the rearrangement of 1-deoxy-D-xylulose 5-phosphate (DXP) to produce the thiazole phosphate moiety of thiamine. Sulfur is provided by the thiocarboxylate moiety of the carrier protein ThiS. In vitro, sulfur can be provided by H(2)S. In Trichodesmium erythraeum (strain IMS101), this protein is Thiazole synthase.